A 113-amino-acid chain; its full sequence is TYRO protein tyrosine kinase-binding protein (113 aa).

The first 21 residues, 1-21 (MGGLEPCSRLLLLPLLLAVSG), serve as a signal peptide directing secretion. The Extracellular segment spans residues 22–40 (LRPVQAQAQSDCSCSTVSP). Residues 41–61 (GVLAGIVMGDLVLTVLIALAV) form a helical membrane-spanning segment. Ca(2+) is bound at residue aspartate 50. Topologically, residues 62 to 113 (YFLGRLVPRGRGAAEAATRKQRITETESPYQELQGQRSDVYSDLNTQRPYYK) are cytoplasmic. Positions 75-113 (AEAATRKQRITETESPYQELQGQRSDVYSDLNTQRPYYK) are disordered. The region spanning 80–108 (RKQRITETESPYQELQGQRSDVYSDLNTQ) is the ITAM domain. Polar residues predominate over residues 87-113 (TESPYQELQGQRSDVYSDLNTQRPYYK). Residues tyrosine 91 and tyrosine 102 each carry the phosphotyrosine modification.

Belongs to the TYROBP family. As to quaternary structure, homodimer; disulfide-linked. Homotrimer; disulfide-linked. Homotetramer; disulfide-linked. Homotrimers and homotetramers form when low levels of partner receptors are available and are competitive with assembly with interacting receptors. They may represent alternative oligomerization states or may be intermediates in the receptor assembly process. Binding of a metal cation aids in homooligomerization through coordination of the metal ion by the subunits of the oligomer. Interacts with TREM1. Interacts with TREM2. Interacts with SIRPB1. Interacts with CLECSF5. Interacts with SIGLEC14. Interacts with CD300LB and CD300E. Interacts with CD300C2. Interacts (via ITAM domain) with SYK (via SH2 domains); activates SYK mediating neutrophil and macrophage integrin-mediated activation. Interacts with KLRC2, KIR2DS3 and KIR2DS5. Interacts with CD300H. Interacts with KIR2DS1. Interacts with KLRD1. Interacts with SIGLEC1. Following ligand binding by associated receptors, tyrosine phosphorylated in the ITAM domain which leads to activation of additional tyrosine kinases and subsequent cell activation. In terms of tissue distribution, expressed at low levels in the early development of the hematopoietic system and in the promonocytic stage and at high levels in mature monocytes. Expressed in hematological cells and tissues such as peripheral blood leukocytes and spleen. Also found in bone marrow, lymph nodes, placenta, lung and liver. Expressed at lower levels in different parts of the brain especially in the basal ganglia and corpus callosum.

The protein resides in the cell membrane. Functionally, adapter protein which non-covalently associates with activating receptors found on the surface of a variety of immune cells to mediate signaling and cell activation following ligand binding by the receptors. TYROBP is tyrosine-phosphorylated in the ITAM domain following ligand binding by the associated receptors which leads to activation of additional tyrosine kinases and subsequent cell activation. Also has an inhibitory role in some cells. Non-covalently associates with activating receptors of the CD300 family to mediate cell activation. Also mediates cell activation through association with activating receptors of the CD200R family. Required for neutrophil activation mediated by integrin. Required for the activation of myeloid cells mediated by the CLEC5A/MDL1 receptor. Associates with natural killer (NK) cell receptors such as KIR2DS2 and the KLRD1/KLRC2 heterodimer to mediate NK cell activation. Also enhances trafficking and cell surface expression of NK cell receptors KIR2DS1, KIR2DS2 and KIR2DS4 and ensures their stability at the cell surface. Associates with SIRPB1 to mediate activation of myeloid cells such as monocytes and dendritic cells. Associates with TREM1 to mediate activation of neutrophils and monocytes. Associates with TREM2 on monocyte-derived dendritic cells to mediate up-regulation of chemokine receptor CCR7 and dendritic cell maturation and survival. Association with TREM2 mediates cytokine-induced formation of multinucleated giant cells which are formed by the fusion of macrophages. Stabilizes the TREM2 C-terminal fragment (TREM2-CTF) produced by TREM2 ectodomain shedding which suppresses the release of pro-inflammatory cytokines. In microglia, required with TREM2 for phagocytosis of apoptotic neurons. Required with ITGAM/CD11B in microglia to control production of microglial superoxide ions which promote the neuronal apoptosis that occurs during brain development. Promotes pro-inflammatory responses in microglia following nerve injury which accelerates degeneration of injured neurons. Positively regulates the expression of the IRAK3/IRAK-M kinase and IL10 production by liver dendritic cells and inhibits their T cell allostimulatory ability. Negatively regulates B cell proliferation. Required for CSF1-mediated osteoclast cytoskeletal organization. Positively regulates multinucleation during osteoclast development. This is TYRO protein tyrosine kinase-binding protein from Homo sapiens (Human).